A 327-amino-acid chain; its full sequence is Aspartate--ammonia ligase (327 aa).

This sequence belongs to the class-II aminoacyl-tRNA synthetase family. AsnA subfamily.

Its subcellular location is the cytoplasm. The enzyme catalyses L-aspartate + NH4(+) + ATP = L-asparagine + AMP + diphosphate + H(+). It functions in the pathway amino-acid biosynthesis; L-asparagine biosynthesis; L-asparagine from L-aspartate (ammonia route): step 1/1. This chain is Aspartate--ammonia ligase, found in Bacillus cereus (strain AH187).